We begin with the raw amino-acid sequence, 58 residues long: MATIKVTQTKSSIGRLPKHKATLRGLGLRKINHTVELEDTPCVRGMINKVYYMVKVEE.

Belongs to the universal ribosomal protein uL30 family. As to quaternary structure, part of the 50S ribosomal subunit.

The sequence is that of Large ribosomal subunit protein uL30 from Vibrio campbellii (strain ATCC BAA-1116).